The sequence spans 355 residues: DNA-directed RNA polymerase subunit alpha (355 aa).

An alpha N-terminal domain (alpha-NTD) region spans residues 1-233 (MVREKVRVST…DLFIPFLHKE (233 aa)). Residues 268 to 355 (KKKIALKSIF…EIYCYSIFFH (88 aa)) form an alpha C-terminal domain (alpha-CTD) region.

It belongs to the RNA polymerase alpha chain family. In terms of assembly, in plastids the minimal PEP RNA polymerase catalytic core is composed of four subunits: alpha, beta, beta', and beta''. When a (nuclear-encoded) sigma factor is associated with the core the holoenzyme is formed, which can initiate transcription.

Its subcellular location is the plastid. The protein resides in the chloroplast. The catalysed reaction is RNA(n) + a ribonucleoside 5'-triphosphate = RNA(n+1) + diphosphate. Functionally, DNA-dependent RNA polymerase catalyzes the transcription of DNA into RNA using the four ribonucleoside triphosphates as substrates. This is DNA-directed RNA polymerase subunit alpha from Jasminum nudiflorum (Winter jasmine).